The primary structure comprises 116 residues: NADH-quinone oxidoreductase subunit A (116 aa).

3 helical membrane-spanning segments follow: residues 3-23, 61-81, and 85-105; these read FTLL…ALGI, FAIL…WAVV, and LGVY…LGLA.

It belongs to the complex I subunit 3 family. In terms of assembly, NDH-1 is composed of 14 different subunits. Subunits NuoA, H, J, K, L, M, N constitute the membrane sector of the complex.

It is found in the cell inner membrane. The catalysed reaction is a quinone + NADH + 5 H(+)(in) = a quinol + NAD(+) + 4 H(+)(out). In terms of biological role, NDH-1 shuttles electrons from NADH, via FMN and iron-sulfur (Fe-S) centers, to quinones in the respiratory chain. The immediate electron acceptor for the enzyme in this species is believed to be a menaquinone. Couples the redox reaction to proton translocation (for every two electrons transferred, four hydrogen ions are translocated across the cytoplasmic membrane), and thus conserves the redox energy in a proton gradient. The chain is NADH-quinone oxidoreductase subunit A from Phocaeicola vulgatus (strain ATCC 8482 / DSM 1447 / JCM 5826 / CCUG 4940 / NBRC 14291 / NCTC 11154) (Bacteroides vulgatus).